A 395-amino-acid polypeptide reads, in one-letter code: NAD(P)H-quinone oxidoreductase subunit H (395 aa).

Belongs to the complex I 49 kDa subunit family. NDH-1 can be composed of about 15 different subunits; different subcomplexes with different compositions have been identified which probably have different functions.

Its subcellular location is the cellular thylakoid membrane. It catalyses the reaction a plastoquinone + NADH + (n+1) H(+)(in) = a plastoquinol + NAD(+) + n H(+)(out). The enzyme catalyses a plastoquinone + NADPH + (n+1) H(+)(in) = a plastoquinol + NADP(+) + n H(+)(out). In terms of biological role, NDH-1 shuttles electrons from an unknown electron donor, via FMN and iron-sulfur (Fe-S) centers, to quinones in the respiratory and/or the photosynthetic chain. The immediate electron acceptor for the enzyme in this species is believed to be plastoquinone. Couples the redox reaction to proton translocation, and thus conserves the redox energy in a proton gradient. Cyanobacterial NDH-1 also plays a role in inorganic carbon-concentration. The sequence is that of NAD(P)H-quinone oxidoreductase subunit H from Prochlorococcus marinus (strain MIT 9301).